The primary structure comprises 305 residues: UDP-3-O-acyl-N-acetylglucosamine deacetylase (305 aa).

3 residues coordinate Zn(2+): His-79, His-238, and Asp-242. The active-site Proton donor is His-265.

Belongs to the LpxC family. It depends on Zn(2+) as a cofactor.

It catalyses the reaction a UDP-3-O-[(3R)-3-hydroxyacyl]-N-acetyl-alpha-D-glucosamine + H2O = a UDP-3-O-[(3R)-3-hydroxyacyl]-alpha-D-glucosamine + acetate. It participates in glycolipid biosynthesis; lipid IV(A) biosynthesis; lipid IV(A) from (3R)-3-hydroxytetradecanoyl-[acyl-carrier-protein] and UDP-N-acetyl-alpha-D-glucosamine: step 2/6. Its function is as follows. Catalyzes the hydrolysis of UDP-3-O-myristoyl-N-acetylglucosamine to form UDP-3-O-myristoylglucosamine and acetate, the committed step in lipid A biosynthesis. The protein is UDP-3-O-acyl-N-acetylglucosamine deacetylase of Salmonella paratyphi A (strain ATCC 9150 / SARB42).